A 91-amino-acid chain; its full sequence is Small ribosomal subunit protein bS16 (91 aa).

Belongs to the bacterial ribosomal protein bS16 family.

In Limosilactobacillus reuteri (strain DSM 20016) (Lactobacillus reuteri), this protein is Small ribosomal subunit protein bS16.